The sequence spans 144 residues: Globin (144 aa).

An N-acetylalanine modification is found at Ala1. The Globin domain maps to Ala1–Lys144. Residue His95 coordinates heme b.

It belongs to the globin family. Monomer.

This chain is Globin, found in Aplysia juliana (Walking sea hare).